The primary structure comprises 399 residues: Tetracycline resistance protein, class A (399 aa).

Helical transmembrane passes span 7-29, 44-66, 73-95, 99-121, 133-155, 160-182, 203-225, 245-267, 279-298, 302-324, 336-358, and 368-390; these read LIVI…PVLP, HYGI…LGAL, RPVL…TAPF, LYIG…AYIA, FGFM…GLMG, HAPF…FLLP, FRWA…MQLV, ATTI…AMIT, ALML…AFAT, MAFP…QAML, LQGS…FTAI, and GWAW…RGLW.

Belongs to the major facilitator superfamily. TCR/Tet family.

It is found in the cell inner membrane. In terms of biological role, resistance to tetracycline by an active tetracycline efflux. This is an energy-dependent process that decreases the accumulation of the antibiotic in whole cells. This protein functions as a metal-tetracycline/H(+) antiporter. The sequence is that of Tetracycline resistance protein, class A (tetA) from Escherichia coli.